A 235-amino-acid polypeptide reads, in one-letter code: Ribonuclease P protein component 3 (235 aa).

Belongs to the eukaryotic/archaeal RNase P protein component 3 family. In terms of assembly, consists of a catalytic RNA component and at least 4-5 protein subunits.

The protein localises to the cytoplasm. The catalysed reaction is Endonucleolytic cleavage of RNA, removing 5'-extranucleotides from tRNA precursor.. Its function is as follows. Part of ribonuclease P, a protein complex that generates mature tRNA molecules by cleaving their 5'-ends. The protein is Ribonuclease P protein component 3 of Haloarcula marismortui (strain ATCC 43049 / DSM 3752 / JCM 8966 / VKM B-1809) (Halobacterium marismortui).